An 855-amino-acid chain; its full sequence is DNA mismatch repair protein MutS (855 aa).

616–623 is an ATP binding site; the sequence is GPNMGGKS.

This sequence belongs to the DNA mismatch repair MutS family.

This protein is involved in the repair of mismatches in DNA. It is possible that it carries out the mismatch recognition step. This protein has a weak ATPase activity. This is DNA mismatch repair protein MutS from Salmonella newport (strain SL254).